A 314-amino-acid polypeptide reads, in one-letter code: 4-hydroxy-3-methylbut-2-enyl diphosphate reductase (314 aa).

Cys-12 serves as a coordination point for [4Fe-4S] cluster. Residues His-41 and His-74 each contribute to the (2E)-4-hydroxy-3-methylbut-2-enyl diphosphate site. The dimethylallyl diphosphate site is built by His-41 and His-74. 2 residues coordinate isopentenyl diphosphate: His-41 and His-74. Residue Cys-96 coordinates [4Fe-4S] cluster. Residue His-124 coordinates (2E)-4-hydroxy-3-methylbut-2-enyl diphosphate. His-124 contacts dimethylallyl diphosphate. His-124 provides a ligand contact to isopentenyl diphosphate. Catalysis depends on Glu-126, which acts as the Proton donor. A (2E)-4-hydroxy-3-methylbut-2-enyl diphosphate-binding site is contributed by Thr-167. Cys-197 contacts [4Fe-4S] cluster. (2E)-4-hydroxy-3-methylbut-2-enyl diphosphate is bound by residues Ser-225, Ser-226, Asn-227, and Ser-269. The dimethylallyl diphosphate site is built by Ser-225, Ser-226, Asn-227, and Ser-269. Ser-225, Ser-226, Asn-227, and Ser-269 together coordinate isopentenyl diphosphate.

This sequence belongs to the IspH family. Requires [4Fe-4S] cluster as cofactor.

It catalyses the reaction isopentenyl diphosphate + 2 oxidized [2Fe-2S]-[ferredoxin] + H2O = (2E)-4-hydroxy-3-methylbut-2-enyl diphosphate + 2 reduced [2Fe-2S]-[ferredoxin] + 2 H(+). It carries out the reaction dimethylallyl diphosphate + 2 oxidized [2Fe-2S]-[ferredoxin] + H2O = (2E)-4-hydroxy-3-methylbut-2-enyl diphosphate + 2 reduced [2Fe-2S]-[ferredoxin] + 2 H(+). It participates in isoprenoid biosynthesis; dimethylallyl diphosphate biosynthesis; dimethylallyl diphosphate from (2E)-4-hydroxy-3-methylbutenyl diphosphate: step 1/1. Its pathway is isoprenoid biosynthesis; isopentenyl diphosphate biosynthesis via DXP pathway; isopentenyl diphosphate from 1-deoxy-D-xylulose 5-phosphate: step 6/6. Catalyzes the conversion of 1-hydroxy-2-methyl-2-(E)-butenyl 4-diphosphate (HMBPP) into a mixture of isopentenyl diphosphate (IPP) and dimethylallyl diphosphate (DMAPP). Acts in the terminal step of the DOXP/MEP pathway for isoprenoid precursor biosynthesis. This chain is 4-hydroxy-3-methylbut-2-enyl diphosphate reductase, found in Haemophilus influenzae (strain PittEE).